The sequence spans 346 residues: Archaeosine synthase subunit beta (346 aa).

In terms of domain architecture, Radical SAM core spans 36 to 276 (GVQTKTLTVI…LRQAKAAHPE (241 aa)). [4Fe-4S] cluster is bound by residues Cys-51, Cys-59, and Cys-62.

This sequence belongs to the radical SAM superfamily. RaSEA family. Forms a robust complex with the archaeosine synthase alpha subunit ArcS. This complex likely consists of an alpha(2)beta(2) heterotetrameric structure. [4Fe-4S] cluster serves as cofactor.

The catalysed reaction is 7-N-[(5S)-5-amino-5-carboxypentyl]formamidino-7-deazaguanosine(15) in tRNA + S-adenosyl-L-methionine = archaeosine(15) in tRNA + L-1-piperideine-6-carboxylate + 5'-deoxyadenosine + L-methionine + 2 H(+). It functions in the pathway tRNA modification; archaeosine-tRNA biosynthesis. Radical SAM enzyme involved in the synthesis of archaeosine, a modified nucleoside present in the dihydrouridine loop (D-loop) of archaeal tRNAs. Catalyzes the cleavage of the C(epsilon)-N bond of the lysine moiety of q0kN15-tRNA, leading to the formation of archaeosine at position 15 in tRNAs. The polypeptide is Archaeosine synthase subunit beta (Methanosarcina acetivorans (strain ATCC 35395 / DSM 2834 / JCM 12185 / C2A)).